The following is a 353-amino-acid chain: Nicotinate-nucleotide--dimethylbenzimidazole phosphoribosyltransferase (353 aa).

Glu320 (proton acceptor) is an active-site residue.

It belongs to the CobT family.

The catalysed reaction is 5,6-dimethylbenzimidazole + nicotinate beta-D-ribonucleotide = alpha-ribazole 5'-phosphate + nicotinate + H(+). The protein operates within nucleoside biosynthesis; alpha-ribazole biosynthesis; alpha-ribazole from 5,6-dimethylbenzimidazole: step 1/2. Catalyzes the synthesis of alpha-ribazole-5'-phosphate from nicotinate mononucleotide (NAMN) and 5,6-dimethylbenzimidazole (DMB). This Pseudoalteromonas translucida (strain TAC 125) protein is Nicotinate-nucleotide--dimethylbenzimidazole phosphoribosyltransferase.